A 255-amino-acid chain; its full sequence is UPF0246 protein Cphy_1568 (255 aa).

This sequence belongs to the UPF0246 family.

The chain is UPF0246 protein Cphy_1568 from Lachnoclostridium phytofermentans (strain ATCC 700394 / DSM 18823 / ISDg) (Clostridium phytofermentans).